Reading from the N-terminus, the 435-residue chain is tRNA modification GTPase MnmE (435 aa).

(6S)-5-formyl-5,6,7,8-tetrahydrofolate-binding residues include arginine 20, glutamate 77, and lysine 117. A TrmE-type G domain is found at 214–359; the sequence is GIKVVIVGVP…FLKEIESFCL (146 aa). Residues 224–229, 243–249, and 268–271 each bind GTP; these read NSGKSS, TEEEGTT, and DTAG. 2 residues coordinate Mg(2+): serine 228 and threonine 249. Position 435 (lysine 435) interacts with (6S)-5-formyl-5,6,7,8-tetrahydrofolate.

Belongs to the TRAFAC class TrmE-Era-EngA-EngB-Septin-like GTPase superfamily. TrmE GTPase family. In terms of assembly, homodimer. Heterotetramer of two MnmE and two MnmG subunits. K(+) serves as cofactor.

Its subcellular location is the cytoplasm. Exhibits a very high intrinsic GTPase hydrolysis rate. Involved in the addition of a carboxymethylaminomethyl (cmnm) group at the wobble position (U34) of certain tRNAs, forming tRNA-cmnm(5)s(2)U34. This is tRNA modification GTPase MnmE from Bartonella bacilliformis (strain ATCC 35685 / KC583 / Herrer 020/F12,63).